We begin with the raw amino-acid sequence, 277 residues long: Shikimate dehydrogenase (NADP(+)) (277 aa).

Residues 15–17 (SKS) and Thr-62 each bind shikimate. The Proton acceptor role is filled by Lys-66. Glu-78 contacts NADP(+). Asn-87 and Asp-103 together coordinate shikimate. Residues 127 to 131 (GAGGA), 151 to 156 (NRTHEK), and Gly-238 contribute to the NADP(+) site.

The protein belongs to the shikimate dehydrogenase family. As to quaternary structure, homodimer.

It carries out the reaction shikimate + NADP(+) = 3-dehydroshikimate + NADPH + H(+). It participates in metabolic intermediate biosynthesis; chorismate biosynthesis; chorismate from D-erythrose 4-phosphate and phosphoenolpyruvate: step 4/7. Its function is as follows. Involved in the biosynthesis of the chorismate, which leads to the biosynthesis of aromatic amino acids. Catalyzes the reversible NADPH linked reduction of 3-dehydroshikimate (DHSA) to yield shikimate (SA). The polypeptide is Shikimate dehydrogenase (NADP(+)) (Shewanella frigidimarina (strain NCIMB 400)).